Here is a 263-residue protein sequence, read N- to C-terminus: uncharacterized protein (263 aa).

ATP is bound at residue Gly-31–Thr-38.

The protein belongs to the CbbQ/NirQ/NorQ/GpvN family.

This is an uncharacterized protein from Staphylococcus epidermidis (strain ATCC 35984 / DSM 28319 / BCRC 17069 / CCUG 31568 / BM 3577 / RP62A).